The sequence spans 212 residues: Stromal cell-derived factor 2-like protein (212 aa).

Residues M1 to A19 form the signal peptide. N-linked (GlcNAc...) asparagine glycosylation is present at N20. MIR domains follow at residues I29–P86, G94–E149, and G151–G206.

Its subcellular location is the secreted. The protein is Stromal cell-derived factor 2-like protein of Dictyostelium discoideum (Social amoeba).